A 156-amino-acid polypeptide reads, in one-letter code: Small ribosomal subunit protein uS7 (156 aa).

Belongs to the universal ribosomal protein uS7 family. Part of the 30S ribosomal subunit. Contacts proteins S9 and S11.

Its function is as follows. One of the primary rRNA binding proteins, it binds directly to 16S rRNA where it nucleates assembly of the head domain of the 30S subunit. Is located at the subunit interface close to the decoding center, probably blocks exit of the E-site tRNA. The chain is Small ribosomal subunit protein uS7 from Renibacterium salmoninarum (strain ATCC 33209 / DSM 20767 / JCM 11484 / NBRC 15589 / NCIMB 2235).